The sequence spans 75 residues: Cytochrome c oxidase subunit 6C (75 aa).

The Mitochondrial matrix portion of the chain corresponds to 1–13; it reads MAPEVLPKPQMRG. A helical transmembrane segment spans residues 14 to 54; the sequence is LLARRLRFHMVTGFVLSLGVAALYKVGVADKRKKAYADFYR. Topologically, residues 55–75 are mitochondrial intermembrane; the sequence is NYDAMKDFEEMRKAGIFQSVK.

This sequence belongs to the cytochrome c oxidase subunit 6c family. In terms of assembly, component of the cytochrome c oxidase (complex IV, CIV), a multisubunit enzyme composed of 14 subunits. The complex is composed of a catalytic core of 3 subunits MT-CO1, MT-CO2 and MT-CO3, encoded in the mitochondrial DNA, and 11 supernumerary subunits COX4I, COX5A, COX5B, COX6A, COX6B, COX6C, COX7A, COX7B, COX7C, COX8 and NDUFA4, which are encoded in the nuclear genome. The complex exists as a monomer or a dimer and forms supercomplexes (SCs) in the inner mitochondrial membrane with NADH-ubiquinone oxidoreductase (complex I, CI) and ubiquinol-cytochrome c oxidoreductase (cytochrome b-c1 complex, complex III, CIII), resulting in different assemblies (supercomplex SCI(1)III(2)IV(1) and megacomplex MCI(2)III(2)IV(2)).

It localises to the mitochondrion inner membrane. The protein operates within energy metabolism; oxidative phosphorylation. In terms of biological role, component of the cytochrome c oxidase, the last enzyme in the mitochondrial electron transport chain which drives oxidative phosphorylation. The respiratory chain contains 3 multisubunit complexes succinate dehydrogenase (complex II, CII), ubiquinol-cytochrome c oxidoreductase (cytochrome b-c1 complex, complex III, CIII) and cytochrome c oxidase (complex IV, CIV), that cooperate to transfer electrons derived from NADH and succinate to molecular oxygen, creating an electrochemical gradient over the inner membrane that drives transmembrane transport and the ATP synthase. Cytochrome c oxidase is the component of the respiratory chain that catalyzes the reduction of oxygen to water. Electrons originating from reduced cytochrome c in the intermembrane space (IMS) are transferred via the dinuclear copper A center (CU(A)) of subunit 2 and heme A of subunit 1 to the active site in subunit 1, a binuclear center (BNC) formed by heme A3 and copper B (CU(B)). The BNC reduces molecular oxygen to 2 water molecules using 4 electrons from cytochrome c in the IMS and 4 protons from the mitochondrial matrix. The protein is Cytochrome c oxidase subunit 6C (COX6C) of Macaca silenus (Lion-tailed macaque).